A 561-amino-acid chain; its full sequence is Putative transport protein DNO_0009 (561 aa).

Helical transmembrane passes span 4-24, 29-49, 74-94, 104-124, and 166-186; these read VAITICILSLVASLGLWLGNI, VGLSIGGVLFGGIIISHIMNL, FGLILFVYTIGIQVGPGFFAS, AFAALIVLLGGLCSVILYYLF, and MGYAIAYPFGIIGVLLAMWLI. RCK C-terminal domains are found at residues 198–283 and 285–369; these read LQFF…ILGE and AGHE…LIGN. 6 helical membrane passes run 379–399, 411–433, 447–467, 472–492, 501–521, and 538–558; these read MLPVFIGIGLGVLLGSIPIYL, AGGPLVVALVLARIGSIGKLYWF, IVLFLSVIGIHAGEHFFSTLL, FSWICYGAIITLLPLLIAGII, YLTICGLLAGAMTDTPALAFA, and VYPLTTFLRIMLPQLIAVLLW.

The protein belongs to the AAE transporter (TC 2.A.81) family. YidE subfamily.

The protein resides in the cell membrane. This chain is Putative transport protein DNO_0009, found in Dichelobacter nodosus (strain VCS1703A).